Reading from the N-terminus, the 428-residue chain is Enolase (428 aa).

Residue Q163 coordinates (2R)-2-phosphoglycerate. Residue E205 is the Proton donor of the active site. Residues D242, E285, and D312 each contribute to the Mg(2+) site. The (2R)-2-phosphoglycerate site is built by K337, R366, S367, and K388. K337 functions as the Proton acceptor in the catalytic mechanism.

Belongs to the enolase family. Mg(2+) serves as cofactor.

It is found in the cytoplasm. It localises to the secreted. The protein resides in the cell surface. The enzyme catalyses (2R)-2-phosphoglycerate = phosphoenolpyruvate + H2O. It participates in carbohydrate degradation; glycolysis; pyruvate from D-glyceraldehyde 3-phosphate: step 4/5. In terms of biological role, catalyzes the reversible conversion of 2-phosphoglycerate (2-PG) into phosphoenolpyruvate (PEP). It is essential for the degradation of carbohydrates via glycolysis. This is Enolase from Polynucleobacter asymbioticus (strain DSM 18221 / CIP 109841 / QLW-P1DMWA-1) (Polynucleobacter necessarius subsp. asymbioticus).